Here is a 367-residue protein sequence, read N- to C-terminus: UDP-N-acetylglucosamine--N-acetylmuramyl-(pentapeptide) pyrophosphoryl-undecaprenol N-acetylglucosamine transferase (367 aa).

UDP-N-acetyl-alpha-D-glucosamine-binding positions include 11–13, Asn125, Arg163, Ser197, and Gln289; that span reads TAG.

The protein belongs to the glycosyltransferase 28 family. MurG subfamily.

The protein resides in the cell membrane. It carries out the reaction di-trans,octa-cis-undecaprenyl diphospho-N-acetyl-alpha-D-muramoyl-L-alanyl-D-glutamyl-meso-2,6-diaminopimeloyl-D-alanyl-D-alanine + UDP-N-acetyl-alpha-D-glucosamine = di-trans,octa-cis-undecaprenyl diphospho-[N-acetyl-alpha-D-glucosaminyl-(1-&gt;4)]-N-acetyl-alpha-D-muramoyl-L-alanyl-D-glutamyl-meso-2,6-diaminopimeloyl-D-alanyl-D-alanine + UDP + H(+). It participates in cell wall biogenesis; peptidoglycan biosynthesis. Cell wall formation. Catalyzes the transfer of a GlcNAc subunit on undecaprenyl-pyrophosphoryl-MurNAc-pentapeptide (lipid intermediate I) to form undecaprenyl-pyrophosphoryl-MurNAc-(pentapeptide)GlcNAc (lipid intermediate II). The protein is UDP-N-acetylglucosamine--N-acetylmuramyl-(pentapeptide) pyrophosphoryl-undecaprenol N-acetylglucosamine transferase of Clavibacter sepedonicus (Clavibacter michiganensis subsp. sepedonicus).